A 104-amino-acid chain; its full sequence is MKSCQKMEGKPENESEPKHEEEPKPEEKPEEEEKLEEEAKAKGTFRERLIQSLQEFKEDIHNRHLSNEDMFREVDEIDEIRRVRNKLIVMRWKVNRNHPYPYLM.

Positions 1–27 are enriched in basic and acidic residues; that stretch reads MKSCQKMEGKPENESEPKHEEEPKPEE. Positions 1-44 are disordered; sequence MKSCQKMEGKPENESEPKHEEEPKPEEKPEEEEKLEEEAKAKGT.

Belongs to the TFS-II family. TFA subfamily.

It is found in the nucleus. May be involved in transcriptional regulation. The protein is Transcription elongation factor A protein-like 9 of Homo sapiens (Human).